We begin with the raw amino-acid sequence, 179 residues long: ATP-dependent protease subunit HslV (179 aa).

Thr-6 is an active-site residue. Positions 164, 167, and 170 each coordinate Na(+).

This sequence belongs to the peptidase T1B family. HslV subfamily. As to quaternary structure, a double ring-shaped homohexamer of HslV is capped on each side by a ring-shaped HslU homohexamer. The assembly of the HslU/HslV complex is dependent on binding of ATP.

The protein localises to the cytoplasm. The enzyme catalyses ATP-dependent cleavage of peptide bonds with broad specificity.. With respect to regulation, allosterically activated by HslU binding. Its function is as follows. Protease subunit of a proteasome-like degradation complex believed to be a general protein degrading machinery. This chain is ATP-dependent protease subunit HslV, found in Listeria innocua serovar 6a (strain ATCC BAA-680 / CLIP 11262).